A 205-amino-acid polypeptide reads, in one-letter code: Superoxide dismutase [Mn] (205 aa).

4 residues coordinate Mn(2+): His-30, His-78, Asp-166, and His-170.

The protein belongs to the iron/manganese superoxide dismutase family. Homodimer. The cofactor is Mn(2+).

The enzyme catalyses 2 superoxide + 2 H(+) = H2O2 + O2. In terms of biological role, destroys superoxide anion radicals which are normally produced within the cells and which are toxic to biological systems. This Chlamydia muridarum (strain MoPn / Nigg) protein is Superoxide dismutase [Mn] (sodA).